We begin with the raw amino-acid sequence, 254 residues long: MNRRRRIYEGKAKILYEGPEPGTLVQFFKDDATAFNAKKHEVIDGKGVLNNRISEHIFTQLNRIGIPTHFIRRLNMREQLIKEVEIIPLEVVVRNVAAGSLAKHLGLEEGTILPRSIIEFYYKADALDDPMVTEEHITAFGWASPQEIDDIMALAIRVNDFLTGLFLGIGIQLVDFKMECGRLWEGDMMRIVVADEISPDSARLWDITTNDKLDKDRFRRDMGGLVEAYQEVARRLGIMNENDTPRPSGPTLVK.

It belongs to the SAICAR synthetase family.

The catalysed reaction is 5-amino-1-(5-phospho-D-ribosyl)imidazole-4-carboxylate + L-aspartate + ATP = (2S)-2-[5-amino-1-(5-phospho-beta-D-ribosyl)imidazole-4-carboxamido]succinate + ADP + phosphate + 2 H(+). It participates in purine metabolism; IMP biosynthesis via de novo pathway; 5-amino-1-(5-phospho-D-ribosyl)imidazole-4-carboxamide from 5-amino-1-(5-phospho-D-ribosyl)imidazole-4-carboxylate: step 1/2. This Brucella melitensis biotype 2 (strain ATCC 23457) protein is Phosphoribosylaminoimidazole-succinocarboxamide synthase.